Reading from the N-terminus, the 100-residue chain is Urease subunit gamma (100 aa).

Belongs to the urease gamma subunit family. Heterotrimer of UreA (gamma), UreB (beta) and UreC (alpha) subunits. Three heterotrimers associate to form the active enzyme.

It is found in the cytoplasm. It catalyses the reaction urea + 2 H2O + H(+) = hydrogencarbonate + 2 NH4(+). It participates in nitrogen metabolism; urea degradation; CO(2) and NH(3) from urea (urease route): step 1/1. This chain is Urease subunit gamma, found in Pseudomonas putida (strain W619).